The following is a 279-amino-acid chain: GATA transcription factor 15 (279 aa).

The interval 52–94 (AYDDHSTVTTSPSSPSSSSTGSVDCTLSLGTPSSRRAEPVAAA) is disordered. Over residues 58–74 (TVTTSPSSPSSSSTGSV) the composition is skewed to low complexity. The GATA-type zinc finger occupies 154-179 (CANCGTASTPLWRNGPRGPKSLCNAC).

Belongs to the type IV zinc-finger family. Class B subfamily. In terms of tissue distribution, highly expressed in inflorescences. Expressed in vascular bundles of root stele within the elongation zones, of elongating upper internodes and of the junctions of leaf blades and sheaths.

Probable transcription factor that regulates organogenesis during transition from the vegetative to the reproductive phase. Regulates the expression of CYP78A11/PLA1, HD3A and MADS1 during reproductive development in rice. May act upstream of CYP78A11/PLA1 during panicle development. Acts independently of the photoperiodic and gibberellin signaling pathways. The sequence is that of GATA transcription factor 15 from Oryza sativa subsp. japonica (Rice).